The chain runs to 421 residues: Caspase-12 (421 aa).

In terms of domain architecture, CARD spans 1 to 92 (MADKKPSKED…QLSLEYQHES (92 aa)). At Ser-85 the chain carries Phosphoserine. Residues 88-131 (YQHESEDQESEESSASSSSSTESEEENEESKDEERAASAHSMAV) form a disordered region. A compositionally biased stretch (acidic residues) spans 109–118 (ESEEENEESK). Residues His-252 and Cys-300 contribute to the active site.

It belongs to the peptidase C14A family. As to quaternary structure, heterotetramer that consists of two anti-parallel arranged heterodimers, each one formed by two subunits (Potential). May interact with TRAF2.

Functionally, involved in the activation cascade of caspases responsible for apoptosis execution. The polypeptide is Caspase-12 (Macaca mulatta (Rhesus macaque)).